Here is a 431-residue protein sequence, read N- to C-terminus: Serine hydroxymethyltransferase 2 (431 aa).

Residues L131 and 135-137 each bind (6S)-5,6,7,8-tetrahydrofolate; that span reads GHL. K240 carries the N6-(pyridoxal phosphate)lysine modification.

It belongs to the SHMT family. As to quaternary structure, homodimer. Requires pyridoxal 5'-phosphate as cofactor.

The protein localises to the cytoplasm. The enzyme catalyses (6R)-5,10-methylene-5,6,7,8-tetrahydrofolate + glycine + H2O = (6S)-5,6,7,8-tetrahydrofolate + L-serine. It participates in one-carbon metabolism; tetrahydrofolate interconversion. Its pathway is amino-acid biosynthesis; glycine biosynthesis; glycine from L-serine: step 1/1. In terms of biological role, catalyzes the reversible interconversion of serine and glycine with tetrahydrofolate (THF) serving as the one-carbon carrier. This reaction serves as the major source of one-carbon groups required for the biosynthesis of purines, thymidylate, methionine, and other important biomolecules. Also exhibits THF-independent aldolase activity toward beta-hydroxyamino acids, producing glycine and aldehydes, via a retro-aldol mechanism. In Vibrio parahaemolyticus serotype O3:K6 (strain RIMD 2210633), this protein is Serine hydroxymethyltransferase 2.